A 1104-amino-acid chain; its full sequence is Protein KIBRA (1104 aa).

WW domains lie at 6-39 and 53-86; these read LPLP…DPRD and DELP…DPRV. A coiled-coil region spans residues 107 to 193; that stretch reads LSAQKEIYQV…ELQFKERGFQ (87 aa). Ser-141 is modified (phosphoserine). Disordered stretches follow at residues 429–449 and 509–547; these read SMQS…RGSL and TQKA…SPPC. Positions 527–542 are enriched in low complexity; it reads TPRSMTSLSPRSSLSS. At Ser-535 the chain carries Phosphoserine. Position 542 is a phosphoserine; by CDK1 (Ser-542). In terms of domain architecture, C2 spans 659–782; it reads GATRVQIALK…RSGERSTRWY (124 aa). A disordered region spans residues 822 to 949; sequence LEKRQEGRSS…DSSTLSKKPP (128 aa). Residues 836–1104 form an interaction with histone H3 region; that stretch reads EGSWTYEEEA…NIPALSADDV (269 aa). Residues 841 to 862 are compositionally biased toward acidic residues; it reads YEEEASENEAVAEEEEEGEEDV. 3 positions are modified to phosphoserine: Ser-887, Ser-891, and Ser-919. Residues 916–930 are compositionally biased toward polar residues; that stretch reads IIRSKTFSPGPQSQY. Thr-921 bears the Phosphothreonine mark. Ser-923 carries the post-translational modification Phosphoserine; by CDK1. Residue Ser-939 is modified to Phosphoserine. Interaction with PRKCZ regions lie at residues 945–988 and 948–967; these read SKKP…LDLQ and PPFV…RPSS. 2 positions are modified to phosphoserine; by PKC/PRKCZ: Ser-967 and Ser-970. The stretch at 994 to 1024 forms a coiled coil; it reads HSQLTQEISVLKELKEHLEQAKNHGEKELPQ. An ADDV motif motif is present at residues 1102–1104; sequence DDV.

Belongs to the WWC family. KIBRA subfamily. Homodimer. Forms heterodimers with WWC2 and WWC3. Interacts with DDN. Interacts with DYNLL1 and histone H3. The interaction with DYNLL1 is mandatory for the recruitment and transactivation functions of ESR1 or DYNLL1 to the target chromatin and the interaction with histone H3 ensures proper regulatory interaction of WWC1-DYNLL1-ESR1 complexes with target chromatin. Interacts (via WW domains) with DDR1 (via PPxY motif) in a collagen-regulated manner. Interacts with PRKCZ (via the protein kinase domain). Forms a tripartite complex with DDR1 and PRKCZ, but predominantly in the absence of collagen. Interacts (via the ADDV motif) with PATJ (via PDZ domain 8). Interacts (via WW domains) with SYNPO (via PPxY motifs). Interacts with NF2 and SNX4. Interacts with CCDC141; retains AMPAR in the cytosol after internalization. Interacts with DLC1 and PRKCZ. Interacts (via WW domains) with LATS1 and LATS2. Phosphorylation at Ser-542 and Ser-923 by CDK1 in response to spindle damage stress regulates mitotic exit, these two sites are dephosphorylated by CDC14B. As to expression, mammary epithelium.

The protein resides in the cytoplasm. It is found in the perinuclear region. Its subcellular location is the nucleus. The protein localises to the cell projection. It localises to the ruffle membrane. The protein resides in the cytosol. Regulator of the Hippo signaling pathway, also known as the Salvador-Warts-Hippo (SWH) pathway. Enhances phosphorylation of LATS1 and YAP1 and negatively regulates cell proliferation and organ growth due to a suppression of the transcriptional activity of YAP1, the major effector of the Hippo pathway. Along with NF2 can synergistically induce the phosphorylation of LATS1 and LATS2 and function in the regulation of Hippo signaling pathway. Acts as a transcriptional coactivator of ESR1 which plays an essential role in DYNLL1-mediated ESR1 transactivation. Modulates directional migration of podocytes. May be associated with memory performance. Regulates collagen-stimulated activation of the ERK/MAPK cascade. Plays an important role in regulating AMPA-selective glutamate receptors (AMPARs) trafficking. The chain is Protein KIBRA (Wwc1) from Mus musculus (Mouse).